Consider the following 447-residue polypeptide: Omega-3 fatty acid desaturase, chloroplastic (447 aa).

The Histidine box-1 motif lies at 167–171 (HDCGH). Residues 203-207 (HRTHH) carry the Histidine box-2 motif. Residues 370-374 (HVIHH) carry the Histidine box-3 motif.

Belongs to the fatty acid desaturase type 1 family.

The protein localises to the plastid. Its subcellular location is the chloroplast membrane. The protein operates within lipid metabolism; polyunsaturated fatty acid biosynthesis. Functionally, chloroplast omega-3 fatty acid desaturase introduces the third double bond in the biosynthesis of 16:3 and 18:3 fatty acids, important constituents of plant membranes. It is thought to use ferredoxin as an electron donor and to act on fatty acids esterified to galactolipids, sulfolipids and phosphatidylglycerol. The chain is Omega-3 fatty acid desaturase, chloroplastic (FAD7) from Sesamum indicum (Oriental sesame).